Here is a 149-residue protein sequence, read N- to C-terminus: Flagellar assembly factor FliW (149 aa).

Belongs to the FliW family. As to quaternary structure, interacts with translational regulator CsrA and flagellin(s).

It localises to the cytoplasm. In terms of biological role, acts as an anti-CsrA protein, binds CsrA and prevents it from repressing translation of its target genes, one of which is flagellin. Binds to flagellin and participates in the assembly of the flagellum. In Thermotoga maritima (strain ATCC 43589 / DSM 3109 / JCM 10099 / NBRC 100826 / MSB8), this protein is Flagellar assembly factor FliW.